The sequence spans 543 residues: CTP synthase (543 aa).

Residues 1–267 (MKQTKYIFVT…LSPIAEILDL (267 aa)) form an amidoligase domain region. CTP is bound at residue S15. Residue S15 participates in UTP binding. Residues 16–21 (SLGKGI) and D73 each bind ATP. Mg(2+) contacts are provided by D73 and E141. CTP-binding positions include 148–150 (DIE), 188–193 (KTKPTQ), and K224. UTP is bound by residues 188-193 (KTKPTQ) and K224. The region spanning 292 to 543 (KIAFVGKYVD…IKAAINYEDN (252 aa)) is the Glutamine amidotransferase type-1 domain. G354 provides a ligand contact to L-glutamine. C381 acts as the Nucleophile; for glutamine hydrolysis in catalysis. L-glutamine-binding positions include 382–385 (LGMQ), E405, and R473. Active-site residues include H516 and E518.

It belongs to the CTP synthase family. In terms of assembly, homotetramer.

It carries out the reaction UTP + L-glutamine + ATP + H2O = CTP + L-glutamate + ADP + phosphate + 2 H(+). The enzyme catalyses L-glutamine + H2O = L-glutamate + NH4(+). The catalysed reaction is UTP + NH4(+) + ATP = CTP + ADP + phosphate + 2 H(+). It functions in the pathway pyrimidine metabolism; CTP biosynthesis via de novo pathway; CTP from UDP: step 2/2. With respect to regulation, allosterically activated by GTP, when glutamine is the substrate; GTP has no effect on the reaction when ammonia is the substrate. The allosteric effector GTP functions by stabilizing the protein conformation that binds the tetrahedral intermediate(s) formed during glutamine hydrolysis. Inhibited by the product CTP, via allosteric rather than competitive inhibition. Catalyzes the ATP-dependent amination of UTP to CTP with either L-glutamine or ammonia as the source of nitrogen. Regulates intracellular CTP levels through interactions with the four ribonucleotide triphosphates. This is CTP synthase from Campylobacter jejuni subsp. jejuni serotype O:2 (strain ATCC 700819 / NCTC 11168).